The primary structure comprises 638 residues: Acetolactate synthase 1, chloroplastic (638 aa).

Residues 1 to 19 show a composition bias toward low complexity; sequence MATAAAASTALTGATTAAP. The interval 1-23 is disordered; the sequence is MATAAAASTALTGATTAAPKARR. A chloroplast-targeting transit peptide spans 1–39; it reads MATAAAASTALTGATTAAPKARRRAHLLATRRALAAPIR. A thiamine diphosphate-binding site is contributed by glutamate 112. Cysteine 132 and cysteine 278 form a disulfide bridge. Residues arginine 214, 320 to 341, and 363 to 382 contribute to the FAD site; these read HGTVYANYAVDKADLLLALGVR and DIDPAEIGKNKQPHVSICAD. A thiamine pyrophosphate binding region spans residues 455 to 535; the sequence is QHQMWAAQYY…VKVFVLNNQH (81 aa). Positions 506 and 533 each coordinate Mg(2+).

Belongs to the TPP enzyme family. It depends on Mg(2+) as a cofactor. Requires thiamine diphosphate as cofactor.

Its subcellular location is the plastid. It is found in the chloroplast. The enzyme catalyses 2 pyruvate + H(+) = (2S)-2-acetolactate + CO2. Its pathway is amino-acid biosynthesis; L-isoleucine biosynthesis; L-isoleucine from 2-oxobutanoate: step 1/4. It functions in the pathway amino-acid biosynthesis; L-valine biosynthesis; L-valine from pyruvate: step 1/4. The sequence is that of Acetolactate synthase 1, chloroplastic (ALS1) from Zea mays (Maize).